The following is a 689-amino-acid chain: E3 ubiquitin-protein ligase RNF43 (689 aa).

The signal sequence occupies residues 1–27; that stretch reads MNRARLQLASLWLLLTVTLQAVASAMG. Topologically, residues 28–191 are extracellular; that stretch reads TTEREMDVKA…VQEQPKWLHH (164 aa). Residues N56 and N86 are each glycosylated (N-linked (GlcNAc...) asparagine). C85 and C113 are joined by a disulfide. A helical transmembrane segment spans residues 192 to 212; the sequence is DIWILLTVAGTVMFFVLYAVA. Over 213–689 the chain is Cytoplasmic; the sequence is RLLCRQPPPQ…EIEAVCEHAV (477 aa). The RING-type; atypical zinc-finger motif lies at 268–308; it reads CAICLEEFTDGQELRILPCCHEYHLGCVDPWLRQNHTCPLC. Disordered stretches follow at residues 386–430, 445–467, and 492–639; these read QMRT…HGSS, TSSSSVHSSQSNQEDSSPPALAS, and VHFH…MSES. 2 stretches are compositionally biased toward low complexity: residues 408 to 430 and 446 to 461; these read DSSGYLPDDPGSDSSSGPCHGSS and SSSSVHSSQSNQEDSS. 2 stretches are compositionally biased toward basic residues: residues 492 to 504 and 512 to 523; these read VHFHQHRHHHYRR and SHPHRSKRRTKV. Over residues 574–588 the composition is skewed to polar residues; the sequence is QQSMPQAASVVQGSS.

It belongs to the ZNRF3 family.

The protein localises to the cell membrane. It is found in the endoplasmic reticulum membrane. The protein resides in the nucleus envelope. It catalyses the reaction S-ubiquitinyl-[E2 ubiquitin-conjugating enzyme]-L-cysteine + [acceptor protein]-L-lysine = [E2 ubiquitin-conjugating enzyme]-L-cysteine + N(6)-ubiquitinyl-[acceptor protein]-L-lysine.. Its pathway is protein modification; protein ubiquitination. In terms of biological role, E3 ubiquitin-protein ligase that acts as a negative regulator of the Wnt signaling pathway by mediating the ubiquitination, endocytosis and subsequent degradation of Wnt receptor complex components Frizzled. Acts on both canonical and non-canonical Wnt signaling pathway. Along with RSPO2 and ZNRF3, constitutes a master switch that governs limb specification. This chain is E3 ubiquitin-protein ligase RNF43 (rnf43), found in Xenopus tropicalis (Western clawed frog).